The chain runs to 186 residues: Large ribosomal subunit protein bL17 (186 aa).

The tract at residues 123 to 186 (SEADRARRVK…ADEAEGSSED (64 aa)) is disordered. Low complexity predominate over residues 139–177 (EAAAAAPQAAVEPEAVEAAPAPDAPEAAPEAEAAAPQPA).

The protein belongs to the bacterial ribosomal protein bL17 family. Part of the 50S ribosomal subunit. Contacts protein L32.

In Mycobacterium avium (strain 104), this protein is Large ribosomal subunit protein bL17.